The chain runs to 150 residues: Putative solute carrier family 19 member 4 (150 aa).

The interval proline 118–aspartate 137 is disordered. Positions alanine 124–glutamine 136 are enriched in basic and acidic residues.

It belongs to the reduced folate carrier (RFC) transporter (TC 2.A.48) family.

The sequence is that of Putative solute carrier family 19 member 4 from Homo sapiens (Human).